The primary structure comprises 468 residues: Protein wingless (468 aa).

A signal peptide spans 1 to 17; sequence MDISYIFVICLMALCSG. Positions 83–106 are binds porcupine; the sequence is VKGANLAISECQHQFRNRRWNCST. Cys93 and Cys104 are joined by a disulfide. Residues Asn103 and Asn108 are each glycosylated (N-linked (GlcNAc...) asparagine). Intrachain disulfides connect Cys146–Cys154, Cys156–Cys185, Cys233–Cys247, and Cys235–Cys242. Ser239 is lipidated: O-palmitoleoyl serine; by PORCN. The tract at residues 333–362 is disordered; the sequence is ISKIHHPNMPSPNSLPQAGQRGGRNGRRQG. Cystine bridges form between Cys397–Cys428, Cys413–Cys423, Cys427–Cys467, Cys443–Cys458, Cys445–Cys455, and Cys450–Cys451. Residue Asn414 is glycosylated (N-linked (GlcNAc...) asparagine).

This sequence belongs to the Wnt family. In terms of assembly, monomer; folds by intramolecular disulfide bonds. Interacts with porcupine (por). Interacts with wls; in the Golgi. Interacts with en. Interacts with the proteoglycan Cow (heparan sulfate-bound form); this stabilizes wg and promotes its extracellular distribution. Interacts with peg; the interaction facilitates short-range diffusion of wg. Palmitoleoylated by porcupine. The lipid group functions as a sorting signal, targeting the ligand to polarized vesicles that transport wg to unique sites at the cell surface. Depalmitoleoylated by notum, leading to inhibit Wnt signaling pathway. Post-translationally, major form is glycosylated at 2 sites, glycosylation is stimulated by porcupine at the ER. In terms of tissue distribution, segmented expression in embryos. In embryonic tracheal cells, expression is in stripes flanking the tracheal placode.

It localises to the secreted. Its subcellular location is the synapse. The protein resides in the membrane. It is found in the extracellular space. The protein localises to the extracellular matrix. Functionally, binds as a ligand to a family of frizzled seven-transmembrane receptors and acts through a cascade of genes on the nucleus. Segment polarity protein. May be a growth factor. Acts on neighboring cells to regulate at least one gene, the homeobox segmentation gene engrailed. Wg signal represses arm phosphorylation. Wg signaling operates by inactivating the sgg repression of engrailed autoactivation. Wg and Wnt2 have a role in the developing trachea and together are responsible for all dorsal trunk formation. Wg also acts in the developing epidermis. Acts as a morphogen, and diffuses long distances despite its lipidation. Lipophorin is required for diffusion, probably by acting as vehicle for its movement, explaining how it can spread over long distances despite its lipidation. In non-neuronal cells, wls directs wg secretion via clathrin-mediated endocytosis and the retromer complex (a conserved protein complex consisting of Vps26 and Vps35) to sustain a wls traffic loop encompassing the Golgi, the cell surface, an endocytic compartment and a retrograde route leading back to the Golgi. In neuronal cells (the larval motorneuron NMJ), wg signal moves across the synapse through the release of wls-containing exosome-like vesicles. The chain is Protein wingless (wg) from Drosophila melanogaster (Fruit fly).